The sequence spans 74 residues: MAVFEKVQEIIVEELGKDAEEVKVETTFDELDADSLDVFQVISEIEDEFDIQIETEEGLNTVGDLVAYVEEKTK.

The region spanning 1–73 is the Carrier domain; that stretch reads MAVFEKVQEI…DLVAYVEEKT (73 aa). The residue at position 35 (serine 35) is an O-(pantetheine 4'-phosphoryl)serine.

It belongs to the acyl carrier protein (ACP) family. Post-translationally, 4'-phosphopantetheine is transferred from CoA to a specific serine of apo-ACP by AcpS. This modification is essential for activity because fatty acids are bound in thioester linkage to the sulfhydryl of the prosthetic group.

It is found in the cytoplasm. It functions in the pathway lipid metabolism; fatty acid biosynthesis. In terms of biological role, carrier of the growing fatty acid chain in fatty acid biosynthesis. The polypeptide is Acyl carrier protein (Streptococcus thermophilus (strain CNRZ 1066)).